The sequence spans 934 residues: Serine/threonine-protein kinase PknD (934 aa).

Residues 4 to 296 (YELIRLIGRG…ELRKALQPHL (293 aa)) form the Protein kinase domain. ATP-binding positions include 10–18 (IGRGGMGEV) and lysine 33. The active-site Proton acceptor is aspartate 138.

This sequence belongs to the protein kinase superfamily. Ser/Thr protein kinase family. Autophosphorylated on serine and threonine residues.

The enzyme catalyses L-seryl-[protein] + ATP = O-phospho-L-seryl-[protein] + ADP + H(+). It catalyses the reaction L-threonyl-[protein] + ATP = O-phospho-L-threonyl-[protein] + ADP + H(+). Together with the serine/threonine kinase Pkn1, may play a role in the specific interactions with host proteins during intracellular growth. The sequence is that of Serine/threonine-protein kinase PknD from Chlamydia muridarum (strain MoPn / Nigg).